The following is a 504-amino-acid chain: DnaJ homolog subfamily C member 3 (504 aa).

Positions 1–31 (MVAPGSVTSRLGSVFPFLLVLVDLQYEGAEC) are cleaved as a signal peptide. TPR repeat units lie at residues 37–70 (VEKH…DPDN), 72–104 (IAYY…KMDF), 105–138 (TAAR…NPSE), 154–187 (MQRL…CVWD), 189–221 (ELRE…KNDN), 222–255 (TEAF…DQDH), 268–301 (LNKL…EPGV), 306–339 (IRSK…EPDN), and 340–373 (VNAL…NEND). The cysteines at positions 248 and 258 are disulfide-linked. S274 is subject to Phosphoserine. A disulfide bridge links C313 with C329. The segment at 375–393 (QIREGLEKAQRLLKQSQRR) is flexible linker. Residues 394–462 (DYYKILGVKR…EMRKKFDDGE (69 aa)) form the J domain. A disordered region spans residues 451-481 (DPEMRKKFDDGEDPLDAESQQGGGGNPFHRS).

Interacts with EIF2AK4/GCN2; this interaction occurs under endoplasmic reticulum (ER) stress, hypothermic and amino acid starving stress conditions and inhibits EIF2AK4/GCN2 kinase activity. Interacts with EIF2AK3. Interacts with EIF2AK2. Forms a trimeric complex with DNAJB1 and HSPA8. Interacts with THAP12.

It localises to the endoplasmic reticulum. In terms of biological role, involved in the unfolded protein response (UPR) during endoplasmic reticulum (ER) stress. Acts as a negative regulator of the EIF2AK4/GCN2 kinase activity by preventing the phosphorylation of eIF-2-alpha at 'Ser-52' and hence attenuating general protein synthesis under ER stress, hypothermic and amino acid starving stress conditions. Co-chaperone of HSPA8/HSC70, it stimulates its ATPase activity. May inhibit both the autophosphorylation of EIF2AK2/PKR and the ability of EIF2AK2 to catalyze phosphorylation of the EIF2A. May inhibit EIF2AK3/PERK activity. This Bos taurus (Bovine) protein is DnaJ homolog subfamily C member 3 (DNAJC3).